The following is a 310-amino-acid chain: tRNA-cytidine(32) 2-sulfurtransferase (310 aa).

Residues 47 to 52 (SGGKDS) carry the PP-loop motif motif. 3 residues coordinate [4Fe-4S] cluster: Cys-122, Cys-125, and Cys-213.

Belongs to the TtcA family. In terms of assembly, homodimer. It depends on Mg(2+) as a cofactor. [4Fe-4S] cluster serves as cofactor.

The protein resides in the cytoplasm. It carries out the reaction cytidine(32) in tRNA + S-sulfanyl-L-cysteinyl-[cysteine desulfurase] + AH2 + ATP = 2-thiocytidine(32) in tRNA + L-cysteinyl-[cysteine desulfurase] + A + AMP + diphosphate + H(+). It participates in tRNA modification. Catalyzes the ATP-dependent 2-thiolation of cytidine in position 32 of tRNA, to form 2-thiocytidine (s(2)C32). The sulfur atoms are provided by the cysteine/cysteine desulfurase (IscS) system. The polypeptide is tRNA-cytidine(32) 2-sulfurtransferase (Haemophilus influenzae (strain PittEE)).